The primary structure comprises 114 residues: Small ribosomal subunit protein bS6 (114 aa).

This sequence belongs to the bacterial ribosomal protein bS6 family.

Binds together with bS18 to 16S ribosomal RNA. This chain is Small ribosomal subunit protein bS6, found in Hydrogenovibrio crunogenus (strain DSM 25203 / XCL-2) (Thiomicrospira crunogena).